The primary structure comprises 347 residues: NADH-quinone oxidoreductase subunit H (347 aa).

Helical transmembrane passes span 13–33 (LIIA…VAYL), 50–70 (PNVV…KFVF), 82–102 (GVFL…WAVI), 115–135 (VGIL…IMGG), 161–181 (IGFV…TDIV), 198–218 (FLDW…ISAL), 248–268 (FLLF…LMTV), 286–306 (VPGI…FAMV), and 325–345 (VFLP…KVFG).

The protein belongs to the complex I subunit 1 family. As to quaternary structure, NDH-1 is composed of 14 different subunits. Subunits NuoA, H, J, K, L, M, N constitute the membrane sector of the complex.

The protein localises to the cell inner membrane. It catalyses the reaction a quinone + NADH + 5 H(+)(in) = a quinol + NAD(+) + 4 H(+)(out). In terms of biological role, NDH-1 shuttles electrons from NADH, via FMN and iron-sulfur (Fe-S) centers, to quinones in the respiratory chain. The immediate electron acceptor for the enzyme in this species is believed to be ubiquinone. Couples the redox reaction to proton translocation (for every two electrons transferred, four hydrogen ions are translocated across the cytoplasmic membrane), and thus conserves the redox energy in a proton gradient. This subunit may bind ubiquinone. The polypeptide is NADH-quinone oxidoreductase subunit H (Brucella ovis (strain ATCC 25840 / 63/290 / NCTC 10512)).